The following is a 683-amino-acid chain: Transforming growth factor-beta-induced protein ig-h3 (683 aa).

An N-terminal signal peptide occupies residues Met1 to Ala23. Ser37 is modified (phosphoserine). The region spanning Gly45–Ala99 is the EMI domain. 5 cysteine pairs are disulfide-bonded: Cys49-Cys85, Cys74-Cys339, Cys84-Cys97, Cys214-Cys317, and Cys473-Cys478. At Cys65 the chain carries S-cysteinyl cysteine. FAS1 domains are found at residues Leu103–Ile236, Thr240–Leu371, Ser375–Leu498, and Met502–Leu632. The short motif at Arg642–Asp644 is the Cell attachment site element.

Binds to type I, II, and IV collagens. Gamma-carboxylation is controversial. Gamma-carboxyglutamated; gamma-carboxyglutamate residues are formed by vitamin K dependent carboxylation; this may be required for calcium binding. According to a more recent report, does not contain vitamin K-dependent gamma-carboxyglutamate residues. In terms of processing, the EMI domain contains 2 expected intradomain disulfide bridges (Cys-49-Cys85 and Cys-84-Cys-97) and one unusual interdomain disulfide bridge to the second FAS1 domain (Cys-74-Cys-339). This arrangement violates the predicted disulfide bridge pattern of an EMI domain.

Its subcellular location is the secreted. It is found in the extracellular space. The protein resides in the extracellular matrix. Plays a role in cell adhesion. May play a role in cell-collagen interactions. In Bos taurus (Bovine), this protein is Transforming growth factor-beta-induced protein ig-h3 (TGFBI).